An 898-amino-acid chain; its full sequence is Conserved oligomeric Golgi complex subunit 5 (898 aa).

The interval 1 to 30 (MNNNNNNNEGVSSSSSSSSSPLPNISSPNL) is disordered. A coiled-coil region spans residues 129–192 (DTLKLGVSNL…VKKLKNHLQA (64 aa)). Disordered regions lie at residues 311–339 (NNNNSNNNITTNNNNNNYNNNNNNNNNNN), 519–551 (SNNSNSNSNNSIESSLSTSSSSSSSSSSSSSTT), and 679–705 (STGGVNNNSNSNNNNEIITINENSKPT). The span at 679–702 (STGGVNNNSNSNNNNEIITINENS) shows a compositional bias: low complexity.

The protein localises to the golgi apparatus membrane. The chain is Conserved oligomeric Golgi complex subunit 5 (cog5) from Dictyostelium discoideum (Social amoeba).